An 813-amino-acid polypeptide reads, in one-letter code: Probable receptor-like protein kinase At5g39020 (813 aa).

Positions 1-21 are cleaved as a signal peptide; sequence MNCNVLFLLSVLVSVTAGVTA. At 22–437 the chain is on the extracellular side; the sequence is AYHPTDVFLF…TPPIKGKPHV (416 aa). N-linked (GlcNAc...) asparagine glycans are attached at residues asparagine 46, asparagine 61, asparagine 165, asparagine 202, asparagine 213, asparagine 263, asparagine 286, asparagine 293, asparagine 384, and asparagine 401. Residues 438-458 traverse the membrane as a helical segment; it reads LVIILIVVGSVIGLATFIVII. Residues 459–813 are Cytoplasmic-facing; that stretch reads MLLIRQMKRK…QTQTLDSTII (355 aa). A Protein kinase domain is found at 496–771; the sequence is KSFSHTVGKG…KVVEMIEGSL (276 aa). Residues 502–510 and lysine 524 each bind ATP; that span reads VGKGGFGTV. Residue aspartate 619 is the Proton acceptor of the active site. The disordered stretch occupies residues 791–813; it reads ESSSLSDGQEAEKQTQTLDSTII. The segment covering 804–813 has biased composition (polar residues); that stretch reads QTQTLDSTII.

This sequence belongs to the protein kinase superfamily. Ser/Thr protein kinase family.

The protein localises to the membrane. This is Probable receptor-like protein kinase At5g39020 from Arabidopsis thaliana (Mouse-ear cress).